We begin with the raw amino-acid sequence, 190 residues long: GTP cyclohydrolase 1 (190 aa).

Zn(2+)-binding residues include Cys-75, His-78, and Cys-146.

Belongs to the GTP cyclohydrolase I family. In terms of assembly, toroid-shaped homodecamer, composed of two pentamers of five dimers.

It carries out the reaction GTP + H2O = 7,8-dihydroneopterin 3'-triphosphate + formate + H(+). The protein operates within cofactor biosynthesis; 7,8-dihydroneopterin triphosphate biosynthesis; 7,8-dihydroneopterin triphosphate from GTP: step 1/1. The polypeptide is GTP cyclohydrolase 1 (Campylobacter jejuni (strain RM1221)).